Consider the following 377-residue polypeptide: Anhydro-N-acetylmuramic acid kinase (377 aa).

19–26 is an ATP binding site; it reads GTSLDGVD.

The protein belongs to the anhydro-N-acetylmuramic acid kinase family.

The catalysed reaction is 1,6-anhydro-N-acetyl-beta-muramate + ATP + H2O = N-acetyl-D-muramate 6-phosphate + ADP + H(+). It participates in amino-sugar metabolism; 1,6-anhydro-N-acetylmuramate degradation. It functions in the pathway cell wall biogenesis; peptidoglycan recycling. Functionally, catalyzes the specific phosphorylation of 1,6-anhydro-N-acetylmuramic acid (anhMurNAc) with the simultaneous cleavage of the 1,6-anhydro ring, generating MurNAc-6-P. Is required for the utilization of anhMurNAc either imported from the medium or derived from its own cell wall murein, and thus plays a role in cell wall recycling. This is Anhydro-N-acetylmuramic acid kinase from Roseobacter denitrificans (strain ATCC 33942 / OCh 114) (Erythrobacter sp. (strain OCh 114)).